The following is a 193-amino-acid chain: Guanylate kinase (193 aa).

The Guanylate kinase-like domain maps to Gly8 to Val188. Position 15-22 (Gly15–Ser22) interacts with ATP.

This sequence belongs to the guanylate kinase family.

It is found in the cytoplasm. The catalysed reaction is GMP + ATP = GDP + ADP. Functionally, essential for recycling GMP and indirectly, cGMP. The protein is Guanylate kinase of Nocardia farcinica (strain IFM 10152).